We begin with the raw amino-acid sequence, 70 residues long: Protein SlyX homolog (70 aa).

This sequence belongs to the SlyX family.

This Shewanella sediminis (strain HAW-EB3) protein is Protein SlyX homolog.